The chain runs to 404 residues: Propionate kinase PduW (404 aa).

This sequence belongs to the acetokinase family. PduW subfamily.

Its subcellular location is the cytoplasm. It catalyses the reaction propanoate + ATP = propanoyl phosphate + ADP. It functions in the pathway polyol metabolism; 1,2-propanediol degradation. It participates in organic acid metabolism; propanoate degradation. In terms of biological role, works with phosphate acetyltransferase (pta) to capture exogenous propionate and regenerate propionyl-CoA during degradation of propionate and 1,2-propanediol (1,2-PD). Ectopic expression partially complements a cobB deletion allowing some growth on propionate. Restores growth to an eutQ deletion on ethanolamine and tetrathionate under anoxic conditions. The polypeptide is Propionate kinase PduW (Salmonella typhimurium (strain LT2 / SGSC1412 / ATCC 700720)).